A 349-amino-acid chain; its full sequence is Putative F-box/kelch-repeat protein At4g02310 (349 aa).

The region spanning 11–58 (SLFSLLPNDIVLNILARVPRWYHPILSCVSKNLRFLVSSSELKITRSL) is the F-box domain. A Kelch repeat occupies 154-204 (KIYVFGGIDDMNKRYYEGIHAQVFDLKTQTWHVGPNLSVKLACLNRSVVTP).

This Arabidopsis thaliana (Mouse-ear cress) protein is Putative F-box/kelch-repeat protein At4g02310.